Here is a 355-residue protein sequence, read N- to C-terminus: Daphnetin O-methyltransferase 1 (355 aa).

3 residues coordinate S-adenosyl-L-homocysteine: D222, D242, and K256. H260 serves as the catalytic Proton acceptor.

This sequence belongs to the class I-like SAM-binding methyltransferase superfamily. Cation-independent O-methyltransferase family. COMT subfamily.

It catalyses the reaction 7,8-dihydroxycoumarin + S-adenosyl-L-methionine = 7-hydroxy-8-methoxycoumarin + S-adenosyl-L-homocysteine + H(+). It functions in the pathway aromatic compound metabolism. Its pathway is secondary metabolite biosynthesis. Functionally, O-methyltransferase involved in the biosynthesis of coumarins natural products such as daphnetin derivatives. Catalyzes specifically the methylation of daphnetin (7,8-dihydroxycoumarin) to produce hydrangetin (7-hydroxy-8-methoxycoumarin). Probably involved in acclimation to low temperature conditions. In Secale cereale (Rye), this protein is Daphnetin O-methyltransferase 1.